Here is a 206-residue protein sequence, read N- to C-terminus: Delta and osm-11 homolog protein 1 (206 aa).

In Caenorhabditis elegans, this protein is Delta and osm-11 homolog protein 1 (dos-1).